Here is a 354-residue protein sequence, read N- to C-terminus: Probable L-ascorbate-6-phosphate lactonase UlaG (354 aa).

It belongs to the UlaG family. A divalent metal cation serves as cofactor.

It is found in the cytoplasm. The enzyme catalyses L-ascorbate 6-phosphate + H2O = 3-dehydro-L-gulonate 6-phosphate. It participates in cofactor degradation; L-ascorbate degradation; D-xylulose 5-phosphate from L-ascorbate: step 1/4. In terms of biological role, probably catalyzes the hydrolysis of L-ascorbate-6-P into 3-keto-L-gulonate-6-P. Is essential for L-ascorbate utilization under anaerobic conditions. The chain is Probable L-ascorbate-6-phosphate lactonase UlaG from Salmonella choleraesuis (strain SC-B67).